The chain runs to 584 residues: Complement component C8 alpha chain (584 aa).

The N-terminal stretch at 1–20 (MFAVVFFILSLMTCQPGVTA) is a signal peptide. Positions 21–30 (QEKVNQRVRR) are excised as a propeptide. The TSP type-1 1 domain maps to 38-91 (TCQLSNWSEWTDCFPCQDKKYRHRSLLQPNKFGGTICSGDIWDQASCSSSTTCV). Cystine bridges form between cysteine 39-cysteine 74, cysteine 50-cysteine 84, cysteine 53-cysteine 90, cysteine 96-cysteine 108, cysteine 102-cysteine 121, cysteine 115-cysteine 130, and cysteine 140-cysteine 177. Tryptophan 44 carries C-linked (Man) tryptophan glycosylation. In terms of domain architecture, LDL-receptor class A spans 94 to 132 (AQCGQDFQCKETGRCLKRHLVCNGDQDCLDGSDEDDCED). Residues leucine 113, asparagine 116, aspartate 118, aspartate 120, aspartate 126, and glutamate 127 each contribute to the Ca(2+) site. Residues 135-498 (AIDEDCSQYE…QYLMEFNACR (364 aa)) enclose the MACPF domain. 4 consecutive transmembrane segments (beta stranded) span residues 248–256 (FGVTIGIGP), 259–266 (SPLLVGVG), 377–384 (GGSLGIQY), and 390–395 (VGGGLS). A disulfide bridge connects residues cysteine 375 and cysteine 399. A glycan (N-linked (GlcNAc...) asparagine) is linked at asparagine 437. Cystine bridges form between cysteine 497–cysteine 544, cysteine 499–cysteine 515, cysteine 502–cysteine 517, and cysteine 519–cysteine 528. In terms of domain architecture, EGF-like spans 499–529 (CGPCFNNGVPILEGTSCRCQCRLGSLGAACE). In terms of domain architecture, TSP type-1 2 spans 539–583 (DGSWSCWSSWSVCRAGIQERRRECDNPAPQNGGASCPGRKVQTQA). Residues tryptophan 542, tryptophan 545, and tryptophan 548 are each glycosylated (C-linked (Man) tryptophan). Disulfide bonds link cysteine 551–cysteine 584 and cysteine 562–cysteine 574. Residues 562 to 584 (CDNPAPQNGGASCPGRKVQTQAC) form a disordered region.

Belongs to the complement C6/C7/C8/C9 family. In terms of assembly, heterotrimer of 3 chains: alpha (C8A), beta (C8B) and gamma (C8G); the alpha and gamma chains are disulfide bonded. Component of the membrane attack complex (MAC), composed of complement C5b, C6, C7, C8A, C8B, C8G and multiple copies of the pore-forming subunit C9.

It localises to the secreted. The protein resides in the target cell membrane. Its activity is regulated as follows. Membrane attack complex (MAC) assembly is inhibited by CD59, thereby protecting self-cells from damage during complement activation. CD59 acts by binding to the beta-haipins of C8 (C8A and C8B), forming an intermolecular beta-sheet that prevents incorporation of the multiple copies of C9 required for complete formation of the osmolytic pore. MAC assembly is also inhibited by clusterin (CLU) chaperones that inhibit polymerization of C9. Functionally, component of the membrane attack complex (MAC), a multiprotein complex activated by the complement cascade, which inserts into a target cell membrane and forms a pore, leading to target cell membrane rupture and cell lysis. The MAC is initiated by proteolytic cleavage of C5 into complement C5b in response to the classical, alternative, lectin and GZMK complement pathways. The complement pathways consist in a cascade of proteins that leads to phagocytosis and breakdown of pathogens and signaling that strengthens the adaptive immune system. C8A, together with C8B and C8G, inserts into the target membrane, but does not form pores by itself. During MAC assembly, associates with C5b, C6 and C7 to form the C5b8 intermediate complex that inserts into the target membrane and traverses the bilayer increasing membrane rigidity. The sequence is that of Complement component C8 alpha chain from Homo sapiens (Human).